Consider the following 299-residue polypeptide: Ribosomal RNA small subunit methyltransferase A (299 aa).

S-adenosyl-L-methionine is bound by residues asparagine 44, valine 46, glycine 71, glutamate 92, aspartate 122, and asparagine 141.

The protein belongs to the class I-like SAM-binding methyltransferase superfamily. rRNA adenine N(6)-methyltransferase family. RsmA subfamily.

It localises to the cytoplasm. It catalyses the reaction adenosine(1518)/adenosine(1519) in 16S rRNA + 4 S-adenosyl-L-methionine = N(6)-dimethyladenosine(1518)/N(6)-dimethyladenosine(1519) in 16S rRNA + 4 S-adenosyl-L-homocysteine + 4 H(+). Its function is as follows. Specifically dimethylates two adjacent adenosines (A1518 and A1519) in the loop of a conserved hairpin near the 3'-end of 16S rRNA in the 30S particle. May play a critical role in biogenesis of 30S subunits. In Rhodococcus erythropolis (strain PR4 / NBRC 100887), this protein is Ribosomal RNA small subunit methyltransferase A.